The primary structure comprises 148 residues: Ubiquitin-like protein 4A (148 aa).

A Ubiquitin-like domain is found at 1–76 (MQLTVKALKG…LNLMVKEQVA (76 aa)).

In terms of assembly, component of the bag6/bat3 complex.

Its subcellular location is the cytoplasm. It localises to the cytosol. The protein localises to the nucleus. As part of a cytosolic protein quality control complex, the bag6/bat3 complex, maintains misfolded and hydrophobic patches-containing proteins in a soluble state and participates in their proper delivery to the endoplasmic reticulum or alternatively can promote their sorting to the proteasome where they undergo degradation. The bag6/bat3 complex is involved in the post-translational delivery of tail-anchored/type II transmembrane proteins to the endoplasmic reticulum membrane. Similarly, the bag6/bat3 complex also functions as a sorting platform for proteins of the secretory pathway that are mislocalized to the cytosol either delivering them to the proteasome for degradation or to the endoplasmic reticulum. The bag6/bat3 complex also plays a role in the endoplasmic reticulum-associated degradation (ERAD), a quality control mechanism that eliminates unwanted proteins of the endoplasmic reticulum through their retrotranslocation to the cytosol and their targeting to the proteasome. It maintains these retrotranslocated proteins in an unfolded yet soluble state condition in the cytosol to ensure their proper delivery to the proteasome. This is Ubiquitin-like protein 4A (ubl4a) from Xenopus tropicalis (Western clawed frog).